Consider the following 269-residue polypeptide: Formamidopyrimidine-DNA glycosylase (269 aa).

Proline 2 functions as the Schiff-base intermediate with DNA in the catalytic mechanism. Glutamate 3 (proton donor) is an active-site residue. Residue lysine 57 is the Proton donor; for beta-elimination activity of the active site. Positions 90, 109, and 150 each coordinate DNA. The FPG-type zinc-finger motif lies at 235–269; the sequence is QVYGRKGEPCRVCGTPIVATKHAQRATFYCRHCQK. Arginine 259 serves as the catalytic Proton donor; for delta-elimination activity.

The protein belongs to the FPG family. As to quaternary structure, monomer. Zn(2+) is required as a cofactor.

It catalyses the reaction Hydrolysis of DNA containing ring-opened 7-methylguanine residues, releasing 2,6-diamino-4-hydroxy-5-(N-methyl)formamidopyrimidine.. The catalysed reaction is 2'-deoxyribonucleotide-(2'-deoxyribose 5'-phosphate)-2'-deoxyribonucleotide-DNA = a 3'-end 2'-deoxyribonucleotide-(2,3-dehydro-2,3-deoxyribose 5'-phosphate)-DNA + a 5'-end 5'-phospho-2'-deoxyribonucleoside-DNA + H(+). Involved in base excision repair of DNA damaged by oxidation or by mutagenic agents. Acts as a DNA glycosylase that recognizes and removes damaged bases. Has a preference for oxidized purines, such as 7,8-dihydro-8-oxoguanine (8-oxoG). Has AP (apurinic/apyrimidinic) lyase activity and introduces nicks in the DNA strand. Cleaves the DNA backbone by beta-delta elimination to generate a single-strand break at the site of the removed base with both 3'- and 5'-phosphates. The protein is Formamidopyrimidine-DNA glycosylase of Salmonella newport (strain SL254).